A 371-amino-acid chain; its full sequence is Poly(rC)-binding protein 3 (371 aa).

KH domains are found at residues 45–95 (TLTI…TITG), 129–182 (PVTL…TISG), and 293–357 (ASTH…QYLI).

Widely expressed, with highest levels in testis and fat tissues and lowest in heart.

It is found in the cytoplasm. Single-stranded nucleic acid binding protein that binds preferentially to oligo dC. In Mus musculus (Mouse), this protein is Poly(rC)-binding protein 3 (Pcbp3).